The chain runs to 152 residues: Small ribosomal subunit protein uS15 (152 aa).

Over residues Met1–Arg16 the composition is skewed to basic residues. Residues Met1–Ser21 are disordered.

It belongs to the universal ribosomal protein uS15 family. As to quaternary structure, part of the 30S ribosomal subunit.

In Archaeoglobus fulgidus (strain ATCC 49558 / DSM 4304 / JCM 9628 / NBRC 100126 / VC-16), this protein is Small ribosomal subunit protein uS15.